Consider the following 321-residue polypeptide: tRNA(Ile)-lysidine synthase (321 aa).

Position 30–35 (Ser30–Ser35) interacts with ATP.

It belongs to the tRNA(Ile)-lysidine synthase family.

The protein resides in the cytoplasm. The catalysed reaction is cytidine(34) in tRNA(Ile2) + L-lysine + ATP = lysidine(34) in tRNA(Ile2) + AMP + diphosphate + H(+). Functionally, ligates lysine onto the cytidine present at position 34 of the AUA codon-specific tRNA(Ile) that contains the anticodon CAU, in an ATP-dependent manner. Cytidine is converted to lysidine, thus changing the amino acid specificity of the tRNA from methionine to isoleucine. The sequence is that of tRNA(Ile)-lysidine synthase from Chlamydia trachomatis serovar L2 (strain ATCC VR-902B / DSM 19102 / 434/Bu).